The primary structure comprises 459 residues: Probable Delta(5) fatty acid desaturase C (459 aa).

A Cytochrome b5 heme-binding domain is found at 9 to 87; the sequence is KKLYSWKEIS…LKQYEIGQVS (79 aa). Residues His45 and His68 each coordinate heme. 2 consecutive transmembrane segments (helical) span residues 121–141 and 151–171; these read FAFG…TSYY and FYLN…FSLH. The short motif at 174-178 is the Histidine box-1 element; it reads HDACH. A helical membrane pass occupies residues 187–207; it reads VWKWLGATYDLFIGASFFYWC. The Histidine box-2 signature appears at 210-215; that stretch reads HVIGHH. 2 helical membrane-spanning segments follow: residues 289-309 and 315-335; these read FEII…FIIP and LVNL…YLSF. The short motif at 394–398 is the Histidine box-3 element; it reads QVVHH.

This sequence belongs to the fatty acid desaturase type 1 family. Fe cation serves as cofactor.

It localises to the membrane. In Dictyostelium discoideum (Social amoeba), this protein is Probable Delta(5) fatty acid desaturase C.